The following is a 658-amino-acid chain: Pentatricopeptide repeat-containing protein 7, mitochondrial (658 aa).

The transit peptide at 1–29 (MRNCVSPLLFAWTKHLRLREFKIPFPNRL) directs the protein to the mitochondrion. PPR repeat units lie at residues 130-164 (VKKRFAECFDKNPDLCLIVYSKLEVETLAKITPIW) and 220-254 (LYVELCLVYHFHNSHLGMDSSTVSNLKRFCFSESL).

The protein resides in the mitochondrion. Its function is as follows. Mitochondrial RNA-binding protein required for the stability of the atp6 mRNA. The chain is Pentatricopeptide repeat-containing protein 7, mitochondrial (ppr7) from Schizosaccharomyces pombe (strain 972 / ATCC 24843) (Fission yeast).